The chain runs to 790 residues: Nitrogen permease reactivator protein (790 aa).

The disordered stretch occupies residues 1–68; it reads MSSLTRLLQE…DRNRANVPVP (68 aa). A compositionally biased stretch (polar residues) spans 16-38; that stretch reads TSNSSPRTSADTLTTTPESQSLD. A compositionally biased stretch (low complexity) spans 46–58; the sequence is SSHIGSVSNSSSS. Ser47 is subject to Phosphoserine; by autocatalysis. Residues Ser85, Ser90, Ser100, Ser111, Ser116, Ser125, Ser137, and Ser141 each carry the phosphoserine modification. Polar residues predominate over residues 151–175; that stretch reads RLSTTSHTSGRAIPSLSSSIPYSVP. Disordered stretches follow at residues 151-188 and 234-258; these read RLST…NSNS and LQKA…SGSF. Low complexity predominate over residues 176 to 188; the sequence is NSNKDNNSSNSNS. Residues 238 to 248 are compositionally biased toward polar residues; that stretch reads SMDSNNANATQ. A compositionally biased stretch (low complexity) spans 249 to 258; it reads SRSISRSGSF. Ser257 carries the phosphoserine; by autocatalysis modification. Phosphoserine is present on residues Ser259, Ser260, Ser288, Ser292, Ser317, Ser320, and Ser328. Residues 276-289 are compositionally biased toward low complexity; that stretch reads NSNSAGMSFSANSN. The segment at 276 to 357 is disordered; sequence NSNSAGMSFS…QSVPRSQHSS (82 aa). Polar residues-rich tracts occupy residues 290 to 305, 314 to 339, and 346 to 357; these read GPSP…NGST, RQSS…SPSS, and PSQSVPRSQHSS. A Phosphotyrosine modification is found at Tyr334. 3 positions are modified to phosphoserine: Ser336, Ser353, and Ser356. A Phosphoserine; by autocatalysis modification is found at Ser357. Ser385 is subject to Phosphoserine. A Protein kinase domain is found at 438-742; the sequence is IKTGADLGAG…IEEIMEDPWI (305 aa). ATP-binding positions include 444–452 and Lys467; that span reads LGAGAGGSV. The Proton acceptor role is filled by Asp561. Disordered stretches follow at residues 666–704 and 766–790; these read LVTR…NIGP and HHTQ…QNNQ. Positions 677–688 are enriched in basic and acidic residues; it reads DESHSTEKKKPE. Low complexity predominate over residues 689 to 701; that stretch reads SSSNNVSDPNNVN.

The protein belongs to the protein kinase superfamily. Ser/Thr protein kinase family. In terms of assembly, interacts with TIP41. In terms of processing, hyperphosphorylated in nitrogen-rich growth medium. Nitrogen limitation (or rapamycin treatment) leads to substantial, though not complete dephosphorylation. Autophosphorylation plays only a minor role and seems not to be regulated by the quality of the nitrogen source.

The protein localises to the cytoplasm. The catalysed reaction is L-seryl-[protein] + ATP = O-phospho-L-seryl-[protein] + ADP + H(+). The enzyme catalyses L-threonyl-[protein] + ATP = O-phospho-L-threonyl-[protein] + ADP + H(+). Its activity is regulated as follows. Dephosphorylation by SIT4 activates NPR1 kinase activity. Functionally, nutrient-regulated protein kinase that promotes the activity of at least 6 distinct transport systems for nitrogenous nutrients under conditions of nitrogen catabolite derepression. Under poor nitrogen growth conditions, required for post-Golgi sorting of the general amino acid permease GAP1 and the three known ammonia permeases, MEP1/2/3, to the plasma membrane. Also contributes to the stability and the retention of GAP1 at the plasma membrane. Inversely, promotes the degradation of tryptophan permease TAT2 under the same conditions. Activity is regulated by the TOR signaling pathway via phosphatase SIT4. Although thought to be involved in regulation of GLN3-dependent transcription by nitrogen catabolite repression, this seems to be an indirect effect from the reduced uptake of the nitrogen-repressing compound. This Saccharomyces cerevisiae (strain ATCC 204508 / S288c) (Baker's yeast) protein is Nitrogen permease reactivator protein (NPR1).